A 251-amino-acid polypeptide reads, in one-letter code: Hydroxyacylglutathione hydrolase (251 aa).

H53, H55, D57, H58, H110, D127, and H165 together coordinate Zn(2+).

Belongs to the metallo-beta-lactamase superfamily. Glyoxalase II family. Monomer. Zn(2+) is required as a cofactor.

The catalysed reaction is an S-(2-hydroxyacyl)glutathione + H2O = a 2-hydroxy carboxylate + glutathione + H(+). Its pathway is secondary metabolite metabolism; methylglyoxal degradation; (R)-lactate from methylglyoxal: step 2/2. Thiolesterase that catalyzes the hydrolysis of S-D-lactoyl-glutathione to form glutathione and D-lactic acid. This Salmonella dublin (strain CT_02021853) protein is Hydroxyacylglutathione hydrolase.